The following is a 526-amino-acid chain: NAD(P)H-quinone oxidoreductase chain 4 2 (526 aa).

A run of 14 helical transmembrane segments spans residues 6–26 (FPWLSTIILFPIIAALFLPLI), 36–56 (WYALTIGLIDFVIIVTAFYTG), 91–111 (LILLTGFITTLAILAAWPVSF), 113–133 (PKLFYFLMLLMYGGQIAVFAV), 137–157 (LLFFFTWELELVPVYLILSIW), 169–189 (FILYTAGGSLFILIAALTMAF), 212–232 (LLLYGGLLIAYGVKLPIFPLH), 243–263 (TAPAHMLLAGILLKMGGYALL), 275–295 (ALFGPVLVILGVVNIVYAALT), 306–326 (IAYSSISHMGFVLIGMASFTD), 332–352 (AMLQMISHGLIGASLFFMVGA), 375–397 (IFAMWTTCSMASLALPGMSGFVA), 417–437 (VIIVFLAAVGVILTPIYLLSM), and 464–484 (VFVIACLLIPIIGIGLYPKAV).

Belongs to the complex I subunit 4 family.

Its subcellular location is the cellular thylakoid membrane. The enzyme catalyses a plastoquinone + NADH + (n+1) H(+)(in) = a plastoquinol + NAD(+) + n H(+)(out). The catalysed reaction is a plastoquinone + NADPH + (n+1) H(+)(in) = a plastoquinol + NADP(+) + n H(+)(out). In terms of biological role, NDH-1 shuttles electrons from NAD(P)H, via FMN and iron-sulfur (Fe-S) centers, to quinones in the respiratory chain. The immediate electron acceptor for the enzyme in this species is believed to be plastoquinone. Couples the redox reaction to proton translocation (for every two electrons transferred, four hydrogen ions are translocated across the cytoplasmic membrane), and thus conserves the redox energy in a proton gradient. The chain is NAD(P)H-quinone oxidoreductase chain 4 2 from Picosynechococcus sp. (strain ATCC 27264 / PCC 7002 / PR-6) (Agmenellum quadruplicatum).